Reading from the N-terminus, the 329-residue chain is 4-hydroxythreonine-4-phosphate dehydrogenase (329 aa).

His136 and Thr137 together coordinate substrate. Residues His166, His211, and His266 each coordinate a divalent metal cation. 3 residues coordinate substrate: Lys274, Asn283, and Arg292.

Belongs to the PdxA family. As to quaternary structure, homodimer. Zn(2+) is required as a cofactor. Requires Mg(2+) as cofactor. The cofactor is Co(2+).

The protein localises to the cytoplasm. It catalyses the reaction 4-(phosphooxy)-L-threonine + NAD(+) = 3-amino-2-oxopropyl phosphate + CO2 + NADH. It participates in cofactor biosynthesis; pyridoxine 5'-phosphate biosynthesis; pyridoxine 5'-phosphate from D-erythrose 4-phosphate: step 4/5. Catalyzes the NAD(P)-dependent oxidation of 4-(phosphooxy)-L-threonine (HTP) into 2-amino-3-oxo-4-(phosphooxy)butyric acid which spontaneously decarboxylates to form 3-amino-2-oxopropyl phosphate (AHAP). The sequence is that of 4-hydroxythreonine-4-phosphate dehydrogenase from Escherichia coli O7:K1 (strain IAI39 / ExPEC).